The chain runs to 606 residues: Phosphomethylpyrimidine synthase (606 aa).

The segment at 84 to 103 (EPYPARSVKPEDNGLTSSPI) is disordered. Residues Asn209, Met238, Tyr267, His303, 323–325 (SRG), 364–367 (DGLR), and Glu403 each bind substrate. His407 provides a ligand contact to Zn(2+). Tyr430 contacts substrate. Position 471 (His471) interacts with Zn(2+). Cys551, Cys554, and Cys559 together coordinate [4Fe-4S] cluster.

This sequence belongs to the ThiC family. In terms of assembly, homodimer. [4Fe-4S] cluster is required as a cofactor.

It carries out the reaction 5-amino-1-(5-phospho-beta-D-ribosyl)imidazole + S-adenosyl-L-methionine = 4-amino-2-methyl-5-(phosphooxymethyl)pyrimidine + CO + 5'-deoxyadenosine + formate + L-methionine + 3 H(+). It functions in the pathway cofactor biosynthesis; thiamine diphosphate biosynthesis. Catalyzes the synthesis of the hydroxymethylpyrimidine phosphate (HMP-P) moiety of thiamine from aminoimidazole ribotide (AIR) in a radical S-adenosyl-L-methionine (SAM)-dependent reaction. This is Phosphomethylpyrimidine synthase from Bartonella tribocorum (strain CIP 105476 / IBS 506).